A 333-amino-acid chain; its full sequence is Autoinducer 2 import system permease protein LsrD (333 aa).

Transmembrane regions (helical) follow at residues 7–27 (YGWE…FGLS), 45–65 (ICIG…GIDI), 67–87 (FGST…AGVP), 90–110 (VAIP…AGLI), 118–138 (LVIT…LSGL), 162–182 (LFGL…FWLL), 212–232 (TLCM…ILLV), 240–260 (SDLG…GGAN), 261–281 (IYGG…VGYL), and 288–308 (IGTP…LVVV).

This sequence belongs to the binding-protein-dependent transport system permease family. AraH/RbsC subfamily. In terms of assembly, the complex is composed of two ATP-binding proteins (LsrA), two transmembrane proteins (LsrC and LsrD) and a solute-binding protein (LsrB).

Its subcellular location is the cell inner membrane. In terms of biological role, part of the ABC transporter complex LsrABCD involved in autoinducer 2 (AI-2) import. Probably responsible for the translocation of the substrate across the membrane. This chain is Autoinducer 2 import system permease protein LsrD (lsrD), found in Yersinia pseudotuberculosis serotype IB (strain PB1/+).